The chain runs to 516 residues: Flavonoid-6-hydroxylase (516 aa).

The chain crosses the membrane as a helical span at residues 3–23; sequence FNAAVCAALAFISLLSYYLIW. Cysteine 455 contributes to the heme binding site.

It belongs to the cytochrome P450 family. Heme serves as cofactor.

The protein resides in the membrane. It carries out the reaction genkwanin + reduced [NADPH--hemoprotein reductase] + O2 = scutellarein 7-methyl ether + oxidized [NADPH--hemoprotein reductase] + H2O. The enzyme catalyses (2S)-sakuranetin + reduced [NADPH--hemoprotein reductase] + O2 = (2S)-7-methylcarthamidin + oxidized [NADPH--hemoprotein reductase] + H2O + H(+). The catalysed reaction is apigenin 4',7-dimethyl ether + reduced [NADPH--hemoprotein reductase] + O2 = ladanein + oxidized [NADPH--hemoprotein reductase] + H2O + H(+). It catalyses the reaction (2S)-naringenin 4',7-dimethyl ether + reduced [NADPH--hemoprotein reductase] + O2 = (2S)-carthamidin-4',7-dimethyl ether + oxidized [NADPH--hemoprotein reductase] + H2O + H(+). The protein operates within flavonoid metabolism. Functionally, 6-OH hydroxylase involved in the biosynthesis of polymethoxylated flavonoids natural products such as pebrellin, aroma compounds which contribute to the flavor of peppermint, and exhibit pharmacological activities such as anti-allergic, anti-oxidant, antibacterial, anti-proliferative, and anti-inflammatory effects. Catalyzes the 6-hydroxylation of 7-O-methylated precursors such as the conversion of genkwanin (GENK) to scutellarein-7-methyl ether (SCU7Me). Can also use apigenin-7,4'-dimethyl ether (AdM), naringenin-7-methyl ether (SAK) and naringenin-7,4'-dimethyl ether (NdM) as substrates. The chain is Flavonoid-6-hydroxylase from Mentha piperita (Peppermint).